Consider the following 75-residue polypeptide: Large ribosomal subunit protein bL28 (75 aa).

The protein belongs to the bacterial ribosomal protein bL28 family.

This chain is Large ribosomal subunit protein bL28, found in Baumannia cicadellinicola subsp. Homalodisca coagulata.